Consider the following 423-residue polypeptide: MIIKKPKGTYDLLFDEISQWQELEKKVKFFFENYNYLEIRTPIIEYNEIFNRTATHSDMVNKEIYNFYDKKGRLIALRPEGTAGVVRSYIENKLDFNENLNKFYYLGSFFRYERPQKGRYRQFHQIGVEVLGDNTPFLDLEVIATVSEMLIFLGLKDFKIIINTLGDESSYKKYIKVFNDYIKKQDIFLCSLCKERLKKNSLRILDCKTCAQKNFLKSVPLITDYLNDFSKQRFDSVIKGLKFMKINFQICPHLVRGLDYYNHTVFEIILNSDSIGKRNSLGGGGCYDRLVEILGGHKTSGIGFALGTERLISVLKKYDLLEYSNNNQIDVYFLFLDSKLFFKSLFLVNQLRNAGIKTEINYRFLPFLKQLKKALKYNPKYFVILGEKEDKNNEISIKNTINQNQKKLSQLEMIKFLKKELDL.

The protein belongs to the class-II aminoacyl-tRNA synthetase family. As to quaternary structure, homodimer.

Its subcellular location is the cytoplasm. It carries out the reaction tRNA(His) + L-histidine + ATP = L-histidyl-tRNA(His) + AMP + diphosphate + H(+). This Phytoplasma mali (strain AT) protein is Histidine--tRNA ligase.